Reading from the N-terminus, the 70-residue chain is DNA-directed RNA polymerase subunit omega (70 aa).

The protein belongs to the RNA polymerase subunit omega family. In terms of assembly, the RNAP catalytic core consists of 2 alpha, 1 beta, 1 beta' and 1 omega subunit. When a sigma factor is associated with the core the holoenzyme is formed, which can initiate transcription.

The catalysed reaction is RNA(n) + a ribonucleoside 5'-triphosphate = RNA(n+1) + diphosphate. In terms of biological role, promotes RNA polymerase assembly. Latches the N- and C-terminal regions of the beta' subunit thereby facilitating its interaction with the beta and alpha subunits. The protein is DNA-directed RNA polymerase subunit omega of Bacillus anthracis.